Reading from the N-terminus, the 379-residue chain is Guanine nucleotide-binding protein G(s) subunit alpha (379 aa).

A G-alpha domain is found at 38-379; it reads STHRLLLLGA…RMHLRQYELL (342 aa). The G1 motif stretch occupies residues 41-54; it reads RLLLLGAGESGKST. Residues 46–53, 182–188, 207–211, 276–279, and alanine 351 each bind GTP; these read GAGESGKS, LRCRVLT, DVGGQ, and NKQD. Mg(2+) is bound by residues serine 53 and threonine 188. Residues 180–188 form a G2 motif region; sequence DILRCRVLT. A G3 motif region spans residues 203–212; the sequence is FHMFDVGGQR. The G4 motif stretch occupies residues 272–279; the sequence is ILFLNKQD. Positions 349–354 are G5 motif; the sequence is TCAVDT.

It belongs to the G-alpha family. G(s) subfamily. As to quaternary structure, g proteins are composed of 3 units; alpha, beta and gamma. The alpha chain contains the guanine nucleotide binding site.

Functionally, guanine nucleotide-binding proteins (G proteins) are involved as modulators or transducers in various transmembrane signaling systems. The G(s) protein is involved in hormonal regulation of adenylate cyclase: it activates the cyclase in response to beta-adrenergic stimuli. In Schistosoma mansoni (Blood fluke), this protein is Guanine nucleotide-binding protein G(s) subunit alpha.